Consider the following 452-residue polypeptide: CCA-adding enzyme (452 aa).

Positions 54 and 57 each coordinate ATP. CTP is bound by residues Ser54 and Arg57. Mg(2+)-binding residues include Asp66, Asp68, and Asp117. His140, Lys160, and Tyr169 together coordinate ATP. CTP contacts are provided by His140, Lys160, and Tyr169.

Belongs to the tRNA nucleotidyltransferase/poly(A) polymerase family. Archaeal CCA-adding enzyme subfamily. As to quaternary structure, homodimer. The cofactor is Mg(2+).

It catalyses the reaction a tRNA precursor + 2 CTP + ATP = a tRNA with a 3' CCA end + 3 diphosphate. The enzyme catalyses a tRNA with a 3' CCA end + 2 CTP + ATP = a tRNA with a 3' CCACCA end + 3 diphosphate. Catalyzes the addition and repair of the essential 3'-terminal CCA sequence in tRNAs without using a nucleic acid template. Adds these three nucleotides in the order of C, C, and A to the tRNA nucleotide-73, using CTP and ATP as substrates and producing inorganic pyrophosphate. tRNA 3'-terminal CCA addition is required both for tRNA processing and repair. Also involved in tRNA surveillance by mediating tandem CCA addition to generate a CCACCA at the 3' terminus of unstable tRNAs. While stable tRNAs receive only 3'-terminal CCA, unstable tRNAs are marked with CCACCA and rapidly degraded. The sequence is that of CCA-adding enzyme from Halobacterium salinarum (strain ATCC 29341 / DSM 671 / R1).